The sequence spans 878 residues: Alanine--tRNA ligase (878 aa).

Positions 566, 570, 668, and 672 each coordinate Zn(2+).

This sequence belongs to the class-II aminoacyl-tRNA synthetase family. It depends on Zn(2+) as a cofactor.

Its subcellular location is the cytoplasm. The enzyme catalyses tRNA(Ala) + L-alanine + ATP = L-alanyl-tRNA(Ala) + AMP + diphosphate. Its function is as follows. Catalyzes the attachment of alanine to tRNA(Ala) in a two-step reaction: alanine is first activated by ATP to form Ala-AMP and then transferred to the acceptor end of tRNA(Ala). Also edits incorrectly charged Ser-tRNA(Ala) and Gly-tRNA(Ala) via its editing domain. The chain is Alanine--tRNA ligase from Bacillus velezensis (strain DSM 23117 / BGSC 10A6 / LMG 26770 / FZB42) (Bacillus amyloliquefaciens subsp. plantarum).